A 90-amino-acid chain; its full sequence is Co-chaperonin GroES (90 aa).

It belongs to the GroES chaperonin family. Heptamer of 7 subunits arranged in a ring. Interacts with the chaperonin GroEL.

The protein resides in the cytoplasm. Its function is as follows. Together with the chaperonin GroEL, plays an essential role in assisting protein folding. The GroEL-GroES system forms a nano-cage that allows encapsulation of the non-native substrate proteins and provides a physical environment optimized to promote and accelerate protein folding. GroES binds to the apical surface of the GroEL ring, thereby capping the opening of the GroEL channel. In Helicobacter hepaticus (strain ATCC 51449 / 3B1), this protein is Co-chaperonin GroES.